We begin with the raw amino-acid sequence, 744 residues long: Kinesin-like protein KIF2A (744 aa).

The segment at leucine 66–glutamine 186 is disordered. Serine 75 bears the Phosphoserine mark. A phosphothreonine mark is found at threonine 78 and threonine 97. Position 100 is a phosphoserine (serine 100). Position 102 is an N6-acetyllysine (lysine 102). Residues phenylalanine 123–serine 140 are compositionally biased toward polar residues. Phosphoserine is present on residues serine 135 and serine 140. Positions arginine 154–aspartate 187 form a coiled coil. Residues cysteine 159–glutamine 186 show a composition bias toward basic and acidic residues. The Kinesin motor domain occupies arginine 223 to phenylalanine 553. Residue glycine 313 to threonine 320 participates in ATP binding. Positions alanine 698–asparagine 737 form a coiled coil.

Belongs to the TRAFAC class myosin-kinesin ATPase superfamily. Kinesin family. MCAK/KIF2 subfamily. In terms of assembly, interacts with AURKA and PLK1. Interacts with PSRC1. Interacts with MCRS1; the interaction enhances recruitment of KIF2A to the minus ends of spindle microtubules which promotes chromosome alignment.

The protein localises to the cytoplasm. It is found in the cytoskeleton. The protein resides in the microtubule organizing center. Its subcellular location is the centrosome. It localises to the spindle pole. The protein localises to the spindle. Its function is as follows. Plus end-directed microtubule-dependent motor required for normal brain development. May regulate microtubule dynamics during axonal growth. Required for normal progression through mitosis. Required for normal congress of chromosomes at the metaphase plate. Required for normal spindle dynamics during mitosis. Promotes spindle turnover. Implicated in formation of bipolar mitotic spindles. Has microtubule depolymerization activity. This Pongo abelii (Sumatran orangutan) protein is Kinesin-like protein KIF2A.